A 274-amino-acid polypeptide reads, in one-letter code: MQKHPTDSQNPWLELRRLTPARIALGRTGTSLPTDAQLDFQYAHAQARDAVHLPFDHAGLSAQLAERGRDSLLLHSAATDRHSYLQRPDLGRRLSDDSAQALRDYASAHPGGFDLAVVVADGLSALAVHRHTLPFLARMEEQTAAEGWSLSPVVLVEQGRVAVADEVGQLLGAKMTVILIGERPGLSSPDSLGLYFTYQPKIGLTDAYRNCISNVRLEGLSYGMAAHRLLYLMREACRRQLSGVNLKDEAQVQTLDSDEQADMKGNFLLGPPQA.

Residues Val-161, Glu-182, and Cys-211 each contribute to the adenosylcob(III)alamin site.

Belongs to the EutC family. The basic unit is a heterodimer which dimerizes to form tetramers. The heterotetramers trimerize; 6 large subunits form a core ring with 6 small subunits projecting outwards. Adenosylcob(III)alamin serves as cofactor.

The protein localises to the bacterial microcompartment. It carries out the reaction ethanolamine = acetaldehyde + NH4(+). It participates in amine and polyamine degradation; ethanolamine degradation. Catalyzes the deamination of various vicinal amino-alcohols to oxo compounds. Allows this organism to utilize ethanolamine as the sole source of nitrogen and carbon in the presence of external vitamin B12. This Pseudomonas fluorescens (strain ATCC BAA-477 / NRRL B-23932 / Pf-5) protein is Ethanolamine ammonia-lyase small subunit.